The sequence spans 198 residues: Putative glutathione S-transferase alpha-2 (198 aa).

At serine 2 the chain carries N-acetylserine. A GST N-terminal domain is found at 5 to 81 (SVPSLTYFQG…YIAKKHNFMG (77 aa)). Residues tyrosine 11, arginine 45, 52-53 (QL), and 65-66 (QS) contribute to the glutathione site. Residues 83 to 198 (NLEEEFLVDQ…YIKERPETKF (116 aa)) form the GST C-terminal domain.

The protein belongs to the GST superfamily. Alpha family.

It catalyses the reaction RX + glutathione = an S-substituted glutathione + a halide anion + H(+). In terms of biological role, conjugation of reduced glutathione to a wide number of exogenous and endogenous hydrophobic electrophiles. This is Putative glutathione S-transferase alpha-2 (gsta2-1) from Dictyostelium discoideum (Social amoeba).